Consider the following 426-residue polypeptide: Anhydromevalonate phosphate decarboxylase (426 aa).

Residues asparagine 148 and glutamate 211 each contribute to the Mn(2+) site. Aspartate 255 functions as the Proton acceptor in the catalytic mechanism.

Belongs to the UbiD family. It depends on prenylated FMN as a cofactor. Mn(2+) serves as cofactor.

It carries out the reaction (2E)-3-methyl-5-phosphooxypent-2-enoate + H(+) = isopentenyl phosphate + CO2. The protein operates within isoprenoid biosynthesis; isopentenyl diphosphate biosynthesis via mevalonate pathway. Functionally, catalyzes the conversion of trans-anhydromevalonate 5-phosphate (tAHMP) into isopentenyl phosphate. Involved in the archaeal mevalonate (MVA) pathway, which provides fundamental precursors for isoprenoid biosynthesis, such as isopentenyl diphosphate (IPP) and dimethylallyl diphosphate (DMAPP). This Archaeoglobus fulgidus (strain ATCC 49558 / DSM 4304 / JCM 9628 / NBRC 100126 / VC-16) protein is Anhydromevalonate phosphate decarboxylase.